A 346-amino-acid polypeptide reads, in one-letter code: L-threonine dehydratase catabolic TdcB (346 aa).

59 to 60 lines the AMP pocket; sequence FT. K64 is subject to N6-(pyridoxal phosphate)lysine. Residues Q94, 125-126, and N321 each bind AMP; that span reads GY.

Belongs to the serine/threonine dehydratase family. As to quaternary structure, in the native structure, TdcB is in a dimeric form, whereas in the TdcB-AMP complex, it exists in a tetrameric form (dimer of dimers). Pyridoxal 5'-phosphate serves as cofactor.

It carries out the reaction L-threonine = 2-oxobutanoate + NH4(+). It participates in amino-acid degradation; L-threonine degradation via propanoate pathway; propanoate from L-threonine: step 1/4. Each protein molecule can bind up to four molecules of AMP, which act as an allosteric activator to the enzyme. Catalyzes the anaerobic formation of alpha-ketobutyrate and ammonia from threonine in a two-step reaction. The first step involved a dehydration of threonine and a production of enamine intermediates (aminocrotonate), which tautomerizes to its imine form (iminobutyrate). Both intermediates are unstable and short-lived. The second step is the nonenzymatic hydrolysis of the enamine/imine intermediates to form 2-ketobutyrate and free ammonia. In the low water environment of the cell, the second step is accelerated by RidA. The protein is L-threonine dehydratase catabolic TdcB (tdcB) of Staphylococcus aureus (strain USA300).